We begin with the raw amino-acid sequence, 663 residues long: Probable peptidyl-glycine alpha-amidating monooxygenase pamn-1 (663 aa).

Positions 1–21 (MNDRISINLIYLVLTFCCVSA) are cleaved as a signal peptide. A peptidylglycine alpha-hydroxylating monooxygenase region spans residues 1–300 (MNDRISINLI…YDAKLDNPYP (300 aa)). Residues histidine 75 and histidine 76 each contribute to the Cu(2+) site. An intrachain disulfide couples cysteine 82 to cysteine 98. Histidine 142 lines the Cu(2+) pocket. The N-linked (GlcNAc...) asparagine glycan is linked to asparagine 191. Intrachain disulfides connect cysteine 194/cysteine 305 and cysteine 261/cysteine 283. Residues histidine 210 and histidine 212 each contribute to the Cu(2+) site. Asparagine 269 is a glycosylation site (N-linked (GlcNAc...) asparagine). Residue methionine 282 coordinates Cu(2+). Residues 301–663 (QGAICAKDYP…WQFKIRHDQN (363 aa)) are peptidyl-alpha-hydroxyglycine alpha-amidating lyase. An a protein-binding site is contributed by arginine 376. An N-linked (GlcNAc...) asparagine glycan is attached at asparagine 411. 4 NHL repeats span residues 411–454 (NQTK…WKIE), 464–507 (SGEL…LDLN), 511–554 (IRQF…MTTQ), and 626–656 (FGQP…LWQF). Cysteine 478 and cysteine 497 are oxidised to a cystine. A protein-binding residues include tyrosine 496 and arginine 543.

In the C-terminal section; belongs to the peptidyl-alpha-hydroxyglycine alpha-amidating lyase family. This sequence in the N-terminal section; belongs to the copper type II ascorbate-dependent monooxygenase family. As to quaternary structure, monomer. It depends on Zn(2+) as a cofactor. Cu(2+) serves as cofactor.

Its subcellular location is the secreted. The catalysed reaction is a [peptide]-C-terminal glycine + 2 L-ascorbate + O2 = a [peptide]-C-terminal (2S)-2-hydroxyglycine + 2 monodehydro-L-ascorbate radical + H2O. It carries out the reaction a [peptide]-C-terminal (2S)-2-hydroxyglycine = a [peptide]-C-terminal amide + glyoxylate. Functionally, probable bifunctional enzyme that catalyzes 2 sequential steps in C-terminal alpha-amidation of peptides. The monooxygenase part produces an unstable peptidyl(2-hydroxyglycine) intermediate that is dismutated to glyoxylate and the corresponding desglycine peptide amide by the lyase part. C-terminal amidation of peptides such as neuropeptides is essential for full biological activity. This Caenorhabditis elegans protein is Probable peptidyl-glycine alpha-amidating monooxygenase pamn-1.